The primary structure comprises 321 residues: Nod factor export ATP-binding protein I (321 aa).

The ABC transporter domain occupies 17-247; that stretch reads LSVEGLRKRY…EIGCDVVEVY (231 aa). 49 to 56 serves as a coordination point for ATP; sequence GPNGAGKT.

This sequence belongs to the ABC transporter superfamily. Lipooligosaccharide exporter (TC 3.A.1.102) family. In terms of assembly, the complex is composed of two ATP-binding proteins (NodI) and two transmembrane proteins (NodJ).

It is found in the cell inner membrane. Part of the ABC transporter complex NodIJ involved in the export of the nodulation factors (Nod factors), the bacterial signal molecules that induce symbiosis and subsequent nodulation induction. Nod factors are LCO (lipo-chitin oligosaccharide), a modified beta-1,4-linked N-acetylglucosamine oligosaccharide. This subunit is responsible for energy coupling to the transport system. This Ralstonia nicotianae (strain ATCC BAA-1114 / GMI1000) (Ralstonia solanacearum) protein is Nod factor export ATP-binding protein I.